The chain runs to 607 residues: Elongation factor 4 (607 aa).

The tr-type G domain maps to 11 to 193 (EKIRNFSIIA…QIVEKVPAPT (183 aa)). Residues 23–28 (DHGKST) and 140–143 (NKID) each bind GTP.

The protein belongs to the TRAFAC class translation factor GTPase superfamily. Classic translation factor GTPase family. LepA subfamily.

The protein localises to the cell membrane. The enzyme catalyses GTP + H2O = GDP + phosphate + H(+). In terms of biological role, required for accurate and efficient protein synthesis under certain stress conditions. May act as a fidelity factor of the translation reaction, by catalyzing a one-codon backward translocation of tRNAs on improperly translocated ribosomes. Back-translocation proceeds from a post-translocation (POST) complex to a pre-translocation (PRE) complex, thus giving elongation factor G a second chance to translocate the tRNAs correctly. Binds to ribosomes in a GTP-dependent manner. The protein is Elongation factor 4 of Streptococcus pneumoniae (strain P1031).